Here is a 295-residue protein sequence, read N- to C-terminus: Protoheme IX farnesyltransferase (295 aa).

9 helical membrane-spanning segments follow: residues 7 to 27 (VTKPGIIFGNLISVIGGFLLA), 34 to 54 (VPLFILTMAGVSLVVASGCVF), 78 to 98 (LIAPGVSLWYASALGVAGIAL), 106 to 126 (LAALLAVLGFIVYVGVYSLYM), 131 to 151 (VYGTLVGSLSGAAPPVIGYCA), 161 to 181 (LILLAIFSLWQMPHSYAIAIF), 207 to 227 (ITLYILAFMVPTLMLFLGGYA), 228 to 248 (GYKYLIVATAVSVWWLGMALS), and 263 to 283 (LFMFSIVTITCLSVMMSVDFQ).

Belongs to the UbiA prenyltransferase family. Protoheme IX farnesyltransferase subfamily.

The protein localises to the cell inner membrane. It catalyses the reaction heme b + (2E,6E)-farnesyl diphosphate + H2O = Fe(II)-heme o + diphosphate. It participates in porphyrin-containing compound metabolism; heme O biosynthesis; heme O from protoheme: step 1/1. Converts heme B (protoheme IX) to heme O by substitution of the vinyl group on carbon 2 of heme B porphyrin ring with a hydroxyethyl farnesyl side group. The protein is Protoheme IX farnesyltransferase of Aeromonas salmonicida (strain A449).